The primary structure comprises 760 residues: MOXD1 homolog 2 (760 aa).

The segment at 1-34 is disordered; it reads MAHPRKAVATPATLQLGPPAQTAQSPAATLRHSR. The segment covering 18–34 has biased composition (low complexity); it reads PPAQTAQSPAATLRHSR. A helical transmembrane segment spans residues 47–67; that stretch reads CFISCHTFNLFLLLLLLASGV. N78, N198, and N223 each carry an N-linked (GlcNAc...) asparagine glycan. One can recognise a DOMON domain in the interval 117–233; the sequence is DDFRILWQII…DTMRLLYMYH (117 aa). Disulfide bonds link C339–C367, C467–C581, and C543–C565. A glycan (N-linked (GlcNAc...) asparagine) is linked at N668. The segment at 678–701 is disordered; it reads RCKPKRPLAPPTERTAPPPASDLS. Residues 740-760 form a helical membrane-spanning segment; that stretch reads FISCLLWLGASSWWLLLMLRT.

It belongs to the copper type II ascorbate-dependent monooxygenase family.

It localises to the membrane. The protein is MOXD1 homolog 2 (olf413) of Drosophila melanogaster (Fruit fly).